A 125-amino-acid polypeptide reads, in one-letter code: uncharacterized protein (125 aa).

2 disordered regions span residues 1-27 (MNKT…GSSS) and 76-125 (NKNN…RFKK). Residues 18–27 (GMNSTTGSSS) are compositionally biased toward low complexity.

This is an uncharacterized protein from Dictyostelium discoideum (Social amoeba).